A 176-amino-acid polypeptide reads, in one-letter code: MSLNHVPAGKSLPEDIYVVIEIPANADPIKYEVDKDSGAVFVDRFMSAPMFYPCNYGYVNNTLSLDGDPVDVLVPTPYPLMPGSVIRCRPVGVLKMTDESGEDAKVVAVPHSKISKEYEHIQDVGDIPELLKAQITHFFERYKELESGKWVKVDGWADVEAAKAEILQSYERAQNK.

Residues lysine 30, arginine 44, and tyrosine 56 each contribute to the substrate site. Residues aspartate 66, aspartate 71, and aspartate 103 each contribute to the Mg(2+) site. Substrate is bound at residue tyrosine 142.

This sequence belongs to the PPase family. As to quaternary structure, homohexamer. Mg(2+) serves as cofactor.

The protein resides in the cytoplasm. The enzyme catalyses diphosphate + H2O = 2 phosphate + H(+). Functionally, catalyzes the hydrolysis of inorganic pyrophosphate (PPi) forming two phosphate ions. This chain is Inorganic pyrophosphatase, found in Vibrio parahaemolyticus serotype O3:K6 (strain RIMD 2210633).